A 1262-amino-acid chain; its full sequence is Isoleucine--tRNA ligase, cytoplasmic (1262 aa).

An N-acetylmethionine modification is found at methionine 1. The short motif at 48-58 (PFATGLPHYGH) is the 'HIGH' region element. The short motif at 600 to 604 (KMSKR) is the 'KMSKS' region element. Lysine 603 contributes to the ATP binding site. Phosphoserine is present on serine 1049. Threonine 1058 carries the post-translational modification Phosphothreonine.

This sequence belongs to the class-I aminoacyl-tRNA synthetase family. Part of a multisubunit complex that groups tRNA ligases for Arg (RARS1), Asp (DARS1), Gln (QARS1), Ile (IARS1), Leu (LARS1), Lys (KARS1), Met (MARS1) the bifunctional ligase for Glu and Pro (EPRS1) and the auxiliary subunits AIMP1/p43, AIMP2/p38 and EEF1E1/p18.

The protein resides in the cytoplasm. The protein localises to the cytosol. It catalyses the reaction tRNA(Ile) + L-isoleucine + ATP = L-isoleucyl-tRNA(Ile) + AMP + diphosphate. Catalyzes the specific attachment of an amino acid to its cognate tRNA in a 2 step reaction: the amino acid (AA) is first activated by ATP to form AA-AMP and then transferred to the acceptor end of the tRNA. This Mus musculus (Mouse) protein is Isoleucine--tRNA ligase, cytoplasmic (Iars1).